We begin with the raw amino-acid sequence, 207 residues long: Small ribosomal subunit protein uS3c (207 aa).

Positions isoleucine 39 to threonine 109 constitute a KH type-2 domain.

It belongs to the universal ribosomal protein uS3 family. As to quaternary structure, part of the 30S ribosomal subunit.

It localises to the plastid. The protein resides in the chloroplast. The protein is Small ribosomal subunit protein uS3c (rps3) of Cyanidium caldarium (Red alga).